Reading from the N-terminus, the 322-residue chain is Ribosomal RNA small subunit methyltransferase H (322 aa).

S-adenosyl-L-methionine contacts are provided by residues 43–45, Asp-60, Phe-86, Asp-104, and Gln-111; that span reads GGY.

This sequence belongs to the methyltransferase superfamily. RsmH family.

It is found in the cytoplasm. It catalyses the reaction cytidine(1402) in 16S rRNA + S-adenosyl-L-methionine = N(4)-methylcytidine(1402) in 16S rRNA + S-adenosyl-L-homocysteine + H(+). Specifically methylates the N4 position of cytidine in position 1402 (C1402) of 16S rRNA. The chain is Ribosomal RNA small subunit methyltransferase H from Caulobacter sp. (strain K31).